The sequence spans 296 residues: 4-diphosphocytidyl-2-C-methyl-D-erythritol kinase (296 aa).

Residue lysine 12 is part of the active site. 94–104 provides a ligand contact to ATP; that stretch reads PAQAGMGGGSS. Aspartate 136 is a catalytic residue.

The protein belongs to the GHMP kinase family. IspE subfamily.

It carries out the reaction 4-CDP-2-C-methyl-D-erythritol + ATP = 4-CDP-2-C-methyl-D-erythritol 2-phosphate + ADP + H(+). The protein operates within isoprenoid biosynthesis; isopentenyl diphosphate biosynthesis via DXP pathway; isopentenyl diphosphate from 1-deoxy-D-xylulose 5-phosphate: step 3/6. Catalyzes the phosphorylation of the position 2 hydroxy group of 4-diphosphocytidyl-2C-methyl-D-erythritol. This chain is 4-diphosphocytidyl-2-C-methyl-D-erythritol kinase, found in Variovorax paradoxus (strain S110).